Reading from the N-terminus, the 196-residue chain is HTH-type transcriptional regulator BetI (196 aa).

The HTH tetR-type domain occupies 8-68 (PIRRSQLIAA…ATMRHLMQAL (61 aa)). The H-T-H motif DNA-binding region spans 31–50 (SIAYIARLAGVSNGIISHYF).

It functions in the pathway amine and polyamine biosynthesis; betaine biosynthesis via choline pathway [regulation]. Repressor involved in the biosynthesis of the osmoprotectant glycine betaine. It represses transcription of the choline transporter BetT and the genes of BetAB involved in the synthesis of glycine betaine. The chain is HTH-type transcriptional regulator BetI from Ectopseudomonas mendocina (strain ymp) (Pseudomonas mendocina).